The sequence spans 377 residues: UDP-N-acetylenolpyruvoylglucosamine reductase (377 aa).

Residues 48-215 enclose the FAD-binding PCMH-type domain; that stretch reads LGGTPMAAVR…LGITLQLHTD (168 aa). Arg-193 is a catalytic residue. Residue Ser-268 is the Proton donor of the active site. Glu-369 is an active-site residue.

Belongs to the MurB family. FAD serves as cofactor.

The protein localises to the cytoplasm. The catalysed reaction is UDP-N-acetyl-alpha-D-muramate + NADP(+) = UDP-N-acetyl-3-O-(1-carboxyvinyl)-alpha-D-glucosamine + NADPH + H(+). The protein operates within cell wall biogenesis; peptidoglycan biosynthesis. In terms of biological role, cell wall formation. This chain is UDP-N-acetylenolpyruvoylglucosamine reductase, found in Corynebacterium diphtheriae (strain ATCC 700971 / NCTC 13129 / Biotype gravis).